A 284-amino-acid chain; its full sequence is Diaminopimelate epimerase (284 aa).

Substrate-binding residues include Asn-20, Gln-53, and Asn-73. Catalysis depends on Cys-82, which acts as the Proton donor. Substrate contacts are provided by residues 83–84 (GN), Asn-167, Asn-200, and 218–219 (ER). Catalysis depends on Cys-227, which acts as the Proton acceptor. 228 to 229 (GS) contacts substrate.

Belongs to the diaminopimelate epimerase family. In terms of assembly, homodimer.

The protein localises to the cytoplasm. The catalysed reaction is (2S,6S)-2,6-diaminopimelate = meso-2,6-diaminopimelate. It functions in the pathway amino-acid biosynthesis; L-lysine biosynthesis via DAP pathway; DL-2,6-diaminopimelate from LL-2,6-diaminopimelate: step 1/1. Its function is as follows. Catalyzes the stereoinversion of LL-2,6-diaminopimelate (L,L-DAP) to meso-diaminopimelate (meso-DAP), a precursor of L-lysine and an essential component of the bacterial peptidoglycan. In Xylella fastidiosa (strain 9a5c), this protein is Diaminopimelate epimerase.